The following is a 152-amino-acid chain: Nucleoside diphosphate kinase B (152 aa).

Residues 1–66 are interaction with AKAP13; the sequence is MANLERTFIA…DRPFFPGLVK (66 aa). ATP contacts are provided by K12, F60, R88, T94, R105, and N115. H118 (pros-phosphohistidine intermediate) is an active-site residue.

It belongs to the NDK family. As to quaternary structure, hexamer of two different chains: An and B (A6, A5B, A4B2, A3B3, A2B4, AB5, B6). Interacts with CAPN8. Interacts with AKAP13. Interacts with ITGB1BP1 (via C-terminal domain region). Interacts with BCL2L10. The cofactor is Mg(2+). The N-terminus is blocked.

The protein localises to the cytoplasm. The protein resides in the cell projection. Its subcellular location is the lamellipodium. It localises to the ruffle. It is found in the nucleus. It catalyses the reaction a 2'-deoxyribonucleoside 5'-diphosphate + ATP = a 2'-deoxyribonucleoside 5'-triphosphate + ADP. The catalysed reaction is a ribonucleoside 5'-diphosphate + ATP = a ribonucleoside 5'-triphosphate + ADP. The enzyme catalyses ATP + protein L-histidine = ADP + protein N-phospho-L-histidine.. Functionally, major role in the synthesis of nucleoside triphosphates other than ATP. The ATP gamma phosphate is transferred to the NDP beta phosphate via a ping-pong mechanism, using a phosphorylated active-site intermediate. Negatively regulates Rho activity by interacting with AKAP13/LBC. Acts as a transcriptional activator of the MYC gene; binds DNA non-specifically. Binds to both single-stranded guanine- and cytosine-rich strands within the nuclease hypersensitive element (NHE) III(1) region of the MYC gene promoter. Does not bind to duplex NHE III(1). Has G-quadruplex (G4) DNA-binding activity, which is independent of its nucleotide-binding and kinase activity. Binds both folded and unfolded G4 with similar low nanomolar affinities. Stabilizes folded G4s regardless of whether they are prefolded or not. Exhibits histidine protein kinase activity. This Rattus norvegicus (Rat) protein is Nucleoside diphosphate kinase B (Nme2).